Here is a 334-residue protein sequence, read N- to C-terminus: Ornithine carbamoyltransferase (334 aa).

Carbamoyl phosphate contacts are provided by residues 56 to 59, Gln-83, Arg-107, and 134 to 137; these read STRT and HPTQ. Residues Asn-168, Asp-232, and 236–237 contribute to the L-ornithine site; that span reads SM. Carbamoyl phosphate is bound by residues 274 to 275 and Arg-320; that span reads CL.

It belongs to the aspartate/ornithine carbamoyltransferase superfamily. OTCase family.

The protein localises to the cytoplasm. It catalyses the reaction carbamoyl phosphate + L-ornithine = L-citrulline + phosphate + H(+). It functions in the pathway amino-acid biosynthesis; L-arginine biosynthesis; L-arginine from L-ornithine and carbamoyl phosphate: step 1/3. In terms of biological role, reversibly catalyzes the transfer of the carbamoyl group from carbamoyl phosphate (CP) to the N(epsilon) atom of ornithine (ORN) to produce L-citrulline. The polypeptide is Ornithine carbamoyltransferase (Shigella dysenteriae serotype 1 (strain Sd197)).